The primary structure comprises 197 residues: Nucleoid occlusion factor SlmA (197 aa).

Residues 7–67 (INRREHILQC…GLIEFIEESL (61 aa)) enclose the HTH tetR-type domain. The segment at residues 30 to 49 (TTAKLASEVGVSEAALYRHF) is a DNA-binding region (H-T-H motif).

The protein belongs to the nucleoid occlusion factor SlmA family. Homodimer. Interacts with FtsZ.

It is found in the cytoplasm. The protein resides in the nucleoid. Its function is as follows. Required for nucleoid occlusion (NO) phenomenon, which prevents Z-ring formation and cell division over the nucleoid. Acts as a DNA-associated cell division inhibitor that binds simultaneously chromosomal DNA and FtsZ, and disrupts the assembly of FtsZ polymers. SlmA-DNA-binding sequences (SBS) are dispersed on non-Ter regions of the chromosome, preventing FtsZ polymerization at these regions. The protein is Nucleoid occlusion factor SlmA of Shewanella oneidensis (strain ATCC 700550 / JCM 31522 / CIP 106686 / LMG 19005 / NCIMB 14063 / MR-1).